A 419-amino-acid chain; its full sequence is Serine hydroxymethyltransferase (419 aa).

(6S)-5,6,7,8-tetrahydrofolate is bound by residues L121 and G125–L127. K229 carries the N6-(pyridoxal phosphate)lysine modification. S354–F356 is a binding site for (6S)-5,6,7,8-tetrahydrofolate.

The protein belongs to the SHMT family. In terms of assembly, homodimer. Requires pyridoxal 5'-phosphate as cofactor.

It is found in the cytoplasm. It carries out the reaction (6R)-5,10-methylene-5,6,7,8-tetrahydrofolate + glycine + H2O = (6S)-5,6,7,8-tetrahydrofolate + L-serine. The protein operates within one-carbon metabolism; tetrahydrofolate interconversion. It functions in the pathway amino-acid biosynthesis; glycine biosynthesis; glycine from L-serine: step 1/1. Catalyzes the reversible interconversion of serine and glycine with tetrahydrofolate (THF) serving as the one-carbon carrier. This reaction serves as the major source of one-carbon groups required for the biosynthesis of purines, thymidylate, methionine, and other important biomolecules. Also exhibits THF-independent aldolase activity toward beta-hydroxyamino acids, producing glycine and aldehydes, via a retro-aldol mechanism. This chain is Serine hydroxymethyltransferase, found in Coxiella burnetii (strain RSA 331 / Henzerling II).